Reading from the N-terminus, the 641-residue chain is NADH-ubiquinone oxidoreductase chain 5 (641 aa).

A run of 17 helical transmembrane segments spans residues 1–21, 33–53, 59–79, 83–103, 121–141, 175–195, 211–231, 243–263, 276–296, 303–322, 367–387, 405–425, 453–473, 476–496, 512–532, 564–584, and 621–641; these read MYLT…VIGR, SLSI…IVLL, ITIY…WAFY, ISIT…LYSI, LFTF…MFVG, VGDL…GSSD, ITIV…QLGL, TPVS…YLIL, LICV…TGLF, VIAY…LGLS, ILPF…ALPF, FLVT…ITAF, PLIM…IGYI, KHLS…VGTL, FGVQ…ALIV, WFDN…GGIF, and IPHY…SIFI.

Belongs to the complex I subunit 5 family.

Its subcellular location is the mitochondrion inner membrane. The enzyme catalyses a ubiquinone + NADH + 5 H(+)(in) = a ubiquinol + NAD(+) + 4 H(+)(out). Its function is as follows. Core subunit of the mitochondrial membrane respiratory chain NADH dehydrogenase (Complex I) that is believed to belong to the minimal assembly required for catalysis. Complex I functions in the transfer of electrons from NADH to the respiratory chain. The immediate electron acceptor for the enzyme is believed to be ubiquinone. In Allomyces macrogynus, this protein is NADH-ubiquinone oxidoreductase chain 5 (ND5).